The primary structure comprises 224 residues: MSIRDWPEAERPREKLLEQGAATLSDAELLAIFLRTGVTGCSAVELARRLLGEFGSLRALLESDLAAFCGHLGLGVAKYAQLQAVLEMGRRHLAERLRRDSVLESPQAVRDYLKARLRHEQHEVFACLFLDTRHRVLAFEVLFQGSIDGASVYPRQVVKRALAHNAAALILTHNHPSGDARPSLADRQLTARLKEALALIDVRVLDHFIIGDGEPLSLAEYGWM.

The MPN domain maps to 102–224; it reads VLESPQAVRD…PLSLAEYGWM (123 aa). The Zn(2+) site is built by His173, His175, and Asp186. The JAMM motif motif lies at 173 to 186; sequence HNHPSGDARPSLAD.

The protein belongs to the UPF0758 family.

The protein is UPF0758 protein PSPA7_6095 of Pseudomonas paraeruginosa (strain DSM 24068 / PA7) (Pseudomonas aeruginosa (strain PA7)).